A 223-amino-acid chain; its full sequence is Thiamine-phosphate synthase (223 aa).

Residues 42-46 (QLRDK) and asparagine 83 each bind 4-amino-2-methyl-5-(diphosphooxymethyl)pyrimidine. Residues aspartate 84 and aspartate 103 each coordinate Mg(2+). Residue serine 122 participates in 4-amino-2-methyl-5-(diphosphooxymethyl)pyrimidine binding. 148-150 (TPT) contributes to the 2-[(2R,5Z)-2-carboxy-4-methylthiazol-5(2H)-ylidene]ethyl phosphate binding site. Lysine 151 is a 4-amino-2-methyl-5-(diphosphooxymethyl)pyrimidine binding site. Glycine 179 lines the 2-[(2R,5Z)-2-carboxy-4-methylthiazol-5(2H)-ylidene]ethyl phosphate pocket.

It belongs to the thiamine-phosphate synthase family. Mg(2+) is required as a cofactor.

It carries out the reaction 2-[(2R,5Z)-2-carboxy-4-methylthiazol-5(2H)-ylidene]ethyl phosphate + 4-amino-2-methyl-5-(diphosphooxymethyl)pyrimidine + 2 H(+) = thiamine phosphate + CO2 + diphosphate. The catalysed reaction is 2-(2-carboxy-4-methylthiazol-5-yl)ethyl phosphate + 4-amino-2-methyl-5-(diphosphooxymethyl)pyrimidine + 2 H(+) = thiamine phosphate + CO2 + diphosphate. The enzyme catalyses 4-methyl-5-(2-phosphooxyethyl)-thiazole + 4-amino-2-methyl-5-(diphosphooxymethyl)pyrimidine + H(+) = thiamine phosphate + diphosphate. Its pathway is cofactor biosynthesis; thiamine diphosphate biosynthesis; thiamine phosphate from 4-amino-2-methyl-5-diphosphomethylpyrimidine and 4-methyl-5-(2-phosphoethyl)-thiazole: step 1/1. In terms of biological role, condenses 4-methyl-5-(beta-hydroxyethyl)thiazole monophosphate (THZ-P) and 2-methyl-4-amino-5-hydroxymethyl pyrimidine pyrophosphate (HMP-PP) to form thiamine monophosphate (TMP). This Mycolicibacterium paratuberculosis (strain ATCC BAA-968 / K-10) (Mycobacterium paratuberculosis) protein is Thiamine-phosphate synthase.